Reading from the N-terminus, the 138-residue chain is Large ribosomal subunit protein bL17 (138 aa).

Belongs to the bacterial ribosomal protein bL17 family. In terms of assembly, part of the 50S ribosomal subunit. Contacts protein L32.

This Granulibacter bethesdensis (strain ATCC BAA-1260 / CGDNIH1) protein is Large ribosomal subunit protein bL17.